The chain runs to 146 residues: MSSLSILHLLLLLLSLHAPQAQGLPLRTPRTPYSSLMEEIMDDLKKITPSPEGSLNSDEKNILANKSLLQANLKAFMTFATDTFGSDSKIMKNLKEFQPVLPTATPTEDSILIEDSNLGDFRMKLEEYLATIRGYLRHDLAAAETI.

An N-terminal signal peptide occupies residues Met1–His17. Asn65 carries N-linked (GlcNAc...) asparagine glycosylation.

Belongs to the IL-3 family. Monomer. In terms of tissue distribution, activated T-cells, mast cells, natural killer cells.

Its subcellular location is the secreted. Functionally, granulocyte/macrophage colony-stimulating factors are cytokines that act in hematopoiesis by controlling the production, differentiation, and function of 2 related white cell populations of the blood, the granulocytes and the monocytes-macrophages. In terms of biological role, this CSF induces granulocytes, macrophages, mast cells, stem cells, erythroid cells, eosinophils and megakaryocytes. This is Interleukin-3 (IL3) from Ovis aries (Sheep).